Reading from the N-terminus, the 231-residue chain is Killer cell lectin-like receptor subfamily F member 1 (231 aa).

Over Met1 to Lys38 the chain is Cytoplasmic. Tyr7 bears the Phosphotyrosine mark. A helical; Signal-anchor for type II membrane protein membrane pass occupies residues Ile39–Ile59. Topologically, residues Leu60–Tyr231 are extracellular. Asn77, Asn91, Asn96, and Asn176 each carry an N-linked (GlcNAc...) asparagine glycan. Residues Tyr121–Gln230 form the C-type lectin domain. 2 cysteine pairs are disulfide-bonded: Cys142–Cys229 and Cys208–Cys221.

As to quaternary structure, homodimer. Interacts with CLEC2B. Phosphorylated on Tyr-7; this phosphorylation is required for NKp80/KLRF1-mediated cytotoxicity.

It localises to the membrane. Functions as an activating receptor involved in immunosurveillance upon binding to various ligands displayed at the surface of myeloid cells. Upon interaction with CLEC2B ligand, stimulates NK-cell cytotoxicity and cytokine production leading to the cytolysis of malignant CLEC2B-expressing myeloid cells. Actviation of the common cytotoxicity pathway involves SRC and SYK kinases. This Macaca fascicularis (Crab-eating macaque) protein is Killer cell lectin-like receptor subfamily F member 1 (KLRF1).